The sequence spans 277 residues: MAVVIDGKQVAQSYRLKLKEEVARLKEERIQPKLTVILIGEDPASQSYVRGKEKAAQEIGMDSDLIRLPEETKESELLHLIERLNADASVHGILVQLPLPKHIDESKVIFAIAPEKDVDGFHPVSVGKMMIGEPTFLPCTPNGILHLVKEMNVPIAGRHVVVVGRSQIVGKPVGMLFLNESATVTYCHSKTADLGAMTRQADILIVAVGVPKLITADMVKPEAVVIDVGVNRVDGKLVGDVEFEAVKEVASMITPVPGGVGPMTITMLLHNTIEAAK.

NADP(+) contacts are provided by residues 164–166 (GRS), serine 189, and valine 230.

Belongs to the tetrahydrofolate dehydrogenase/cyclohydrolase family. Homodimer.

The catalysed reaction is (6R)-5,10-methylene-5,6,7,8-tetrahydrofolate + NADP(+) = (6R)-5,10-methenyltetrahydrofolate + NADPH. It catalyses the reaction (6R)-5,10-methenyltetrahydrofolate + H2O = (6R)-10-formyltetrahydrofolate + H(+). Its pathway is one-carbon metabolism; tetrahydrofolate interconversion. Its function is as follows. Catalyzes the oxidation of 5,10-methylenetetrahydrofolate to 5,10-methenyltetrahydrofolate and then the hydrolysis of 5,10-methenyltetrahydrofolate to 10-formyltetrahydrofolate. This is Bifunctional protein FolD from Exiguobacterium sibiricum (strain DSM 17290 / CCUG 55495 / CIP 109462 / JCM 13490 / 255-15).